A 286-amino-acid polypeptide reads, in one-letter code: 2-hydroxy-6-oxononadienedioate/2-hydroxy-6-oxononatrienedioate hydrolase 2 (286 aa).

His266 (proton acceptor) is an active-site residue.

The protein belongs to the AB hydrolase superfamily. MhpC family. As to quaternary structure, homodimer.

The enzyme catalyses (2Z,4E)-2-hydroxy-6-oxonona-2,4-dienedioate + H2O = (2Z)-2-hydroxypenta-2,4-dienoate + succinate + H(+). It carries out the reaction (2Z,4E,7E)-2-hydroxy-6-oxonona-2,4,7-trienedioate + H2O = (2Z)-2-hydroxypenta-2,4-dienoate + fumarate + H(+). It functions in the pathway aromatic compound metabolism; 3-phenylpropanoate degradation. In terms of biological role, catalyzes the cleavage of the C5-C6 bond of 2-hydroxy-6-oxononadienedioate and 2-hydroxy-6-oxononatrienedioate, a dienol ring fission product of the bacterial meta-cleavage pathway for degradation of phenylpropionic acid. This chain is 2-hydroxy-6-oxononadienedioate/2-hydroxy-6-oxononatrienedioate hydrolase 2, found in Pseudomonas putida (Arthrobacter siderocapsulatus).